Consider the following 156-residue polypeptide: Ribosomal RNA large subunit methyltransferase H (156 aa).

S-adenosyl-L-methionine is bound by residues Leu-73, Gly-104, and 123-128 (LSPLTL).

The protein belongs to the RNA methyltransferase RlmH family. Homodimer.

The protein localises to the cytoplasm. It catalyses the reaction pseudouridine(1915) in 23S rRNA + S-adenosyl-L-methionine = N(3)-methylpseudouridine(1915) in 23S rRNA + S-adenosyl-L-homocysteine + H(+). Its function is as follows. Specifically methylates the pseudouridine at position 1915 (m3Psi1915) in 23S rRNA. The chain is Ribosomal RNA large subunit methyltransferase H from Photobacterium profundum (strain SS9).